We begin with the raw amino-acid sequence, 194 residues long: Probable transcription factor At4g00130 (194 aa).

It belongs to the GeBP family.

The polypeptide is Probable transcription factor At4g00130 (Arabidopsis thaliana (Mouse-ear cress)).